The chain runs to 185 residues: Pre-histone-like nucleoprotein (185 aa).

Serine 2 bears the N-acetylserine; by host mark. The propeptide occupies 2–23 (SILISPDNNTGWGLCSAGMYGG). Position 55 is a phosphothreonine; by host (threonine 55). Residue serine 172 is modified to Phosphoserine; by host. Positions 175–185 (RVPVRSRPPRS) match the Nuclear localization signal motif.

Belongs to the adenoviridae histone-like nucleoprotein family. As to quaternary structure, interacts with the core-capsid bridging protein; this interaction bridges the virus core to the capsid. Interacts with host NPM1; this interaction might play a role in placing the pre-histone-like nucleoprotein on the viral DNA or regulating viral gene expression. Interacts with host HMGB1; this interaction inhibits host immune response. Cleaved near the N-terminus by the viral protease during virion maturation to form the mature protein.

Its subcellular location is the virion. It localises to the host nucleus. It is found in the host nucleolus. Plays a role in the inhibition of host immune response within the nucleus. Interacts with cellular nucleosomes and immobilizes the host immune danger signal HMGB1 on chromatin. In turn, prevents HMGB1 release out of the cell and thus decreases inflammation. Also plays a role in the wrapping and condensation of the viral DNA. May also promote viral genome import into the nucleus. The chain is Pre-histone-like nucleoprotein from Human adenovirus F serotype 40 (HAdV-40).